Here is a 249-residue protein sequence, read N- to C-terminus: RNA-free ribonuclease P (249 aa).

The disordered stretch occupies residues 226-249; sequence NENEPEYENRDKSKEGSSGEIEFI. Basic and acidic residues predominate over residues 232 to 242; sequence YENRDKSKEGS.

This sequence belongs to the HARP family.

The enzyme catalyses Endonucleolytic cleavage of RNA, removing 5'-extranucleotides from tRNA precursor.. In terms of biological role, RNA-free RNase P that catalyzes the removal of the 5'-leader sequence from pre-tRNA to produce the mature 5'-terminus. In Methanosarcina barkeri (strain Fusaro / DSM 804), this protein is RNA-free ribonuclease P.